The following is a 456-amino-acid chain: Keratin, type I cytoskeletal 12 (456 aa).

Over residues 1-19 the composition is skewed to polar residues; the sequence is MSLSVRTSALSRRSSSQNG. The interval 1–25 is disordered; that stretch reads MSLSVRTSALSRRSSSQNGVAGRPW. Residues 1–114 are head; it reads MSLSVRTSAL…GNDGGLLSGS (114 aa). A coil 1A region spans residues 115 to 150; the sequence is EKETMQNLNDRLASYLGKVRALEEANAELENKIREW. An IF rod domain is found at 115 to 402; that stretch reads EKETMQNLND…RLLEGDTQGD (288 aa). The tract at residues 154-171 is linker 1; sequence RRTGDSGSQSDYSKYYPL. A coil 1B region spans residues 172–263; that stretch reads IEDLKNKIIS…KNHEEELQSF (92 aa). Residues 264-286 form a linker 12 region; the sequence is QAGGPGEVNVEMDAAPGVDLTKS. Positions 287 to 397 are coil 2; it reads GELRKEINSN…IETYRRLLEG (111 aa). The segment at 398–456 is tail; sequence DTQGDGFDESLSLTVSKPQAPSVDSSKDPNKTRKIKTVVQEIVNGEVVSSQVQELEEAM. A disordered region spans residues 405 to 430; the sequence is DESLSLTVSKPQAPSVDSSKDPNKTR. Residues 408 to 421 show a composition bias toward polar residues; that stretch reads LSLTVSKPQAPSVD.

The protein belongs to the intermediate filament family. As to quaternary structure, heterotetramer of two type I and two type II keratins. Keratin-3 associates with keratin-12.

Functionally, involved in corneal epithelium organization, integrity and corneal keratin expression. The polypeptide is Keratin, type I cytoskeletal 12 (Rattus norvegicus (Rat)).